Reading from the N-terminus, the 678-residue chain is NADPH--cytochrome P450 reductase (678 aa).

Over 1–21 the chain is Lumenal; it reads MADSNMDAGTTTSEMVAEEVS. A helical membrane pass occupies residues 22–42; the sequence is LFSTTDVILFSLIVGVMTYWF. At 43–678 the chain is on the cytoplasmic side; that stretch reads LFRKKKEEVP…KGRYSLDVWS (636 aa). Residue S63 is modified to Phosphoserine. The 145-residue stretch at 80–224 folds into the Flavodoxin-like domain; sequence IIVFYGSQTG…DFITWREQFW (145 aa). FMN contacts are provided by residues 86–91, 138–141, 173–182, and D208; these read SQTGTA, ATYG, and LGNKTYEHFN. One can recognise an FAD-binding FR-type domain in the interval 279 to 521; it reads KNPFLAVVTT…YVRKSQFRLP (243 aa). R298 serves as a coordination point for NADP(+). FAD contacts are provided by residues R424, 454 to 457, 472 to 474, Y478, and 488 to 491; these read RYYS, CAV, and GVAT. NADP(+) contacts are provided by residues T535, 596–597, 602–606, and D639; these read SR and KVYVQ. W677 contributes to the FAD binding site.

Belongs to the NADPH--cytochrome P450 reductase family. This sequence in the N-terminal section; belongs to the flavodoxin family. The protein in the C-terminal section; belongs to the flavoprotein pyridine nucleotide cytochrome reductase family. The cofactor is FAD. FMN serves as cofactor.

The protein localises to the endoplasmic reticulum membrane. It carries out the reaction 2 oxidized [cytochrome P450] + NADPH = 2 reduced [cytochrome P450] + NADP(+) + H(+). In terms of biological role, this enzyme is required for electron transfer from NADP to cytochrome P450 in microsomes. It can also provide electron transfer to heme oxygenase and cytochrome B5. The polypeptide is NADPH--cytochrome P450 reductase (Bos taurus (Bovine)).